The chain runs to 424 residues: UDP-N-acetylglucosamine 1-carboxyvinyltransferase (424 aa).

22–23 (KN) contributes to the phosphoenolpyruvate binding site. Arg93 is a binding site for UDP-N-acetyl-alpha-D-glucosamine. The Proton donor role is filled by Cys117. Residue Cys117 is modified to 2-(S-cysteinyl)pyruvic acid O-phosphothioketal. Residues 162–165 (KVSV), Asp307, and Ile329 contribute to the UDP-N-acetyl-alpha-D-glucosamine site.

It belongs to the EPSP synthase family. MurA subfamily.

It localises to the cytoplasm. The enzyme catalyses phosphoenolpyruvate + UDP-N-acetyl-alpha-D-glucosamine = UDP-N-acetyl-3-O-(1-carboxyvinyl)-alpha-D-glucosamine + phosphate. It participates in cell wall biogenesis; peptidoglycan biosynthesis. Functionally, cell wall formation. Adds enolpyruvyl to UDP-N-acetylglucosamine. The sequence is that of UDP-N-acetylglucosamine 1-carboxyvinyltransferase from Actinobacillus pleuropneumoniae serotype 5b (strain L20).